Reading from the N-terminus, the 810-residue chain is MEHKEVVLLLLLFLKSGQGEPLDDYVNTQGASLFSVTKKQLGAGSIEECAAKCEEDEEFTCRAFQYHSKEQQCVIMAENRKSSIIIRMRDVVLFEKKVYLSECKTGNGKNYRGTMSKTKNGITCQKWSSTSPHRPRFSPATHPSEGLEENYCRNPDNDPQGPWCYTTDPEKRYDYCDILECEEECMHCSGENYDGKISKTMSGLECQAWDSQSPHAHGYIPSKFPNKNLKKNYCRNPDRELRPWCFTTDPNKRWELCDIPRCTTPPPSSGPTYQCLKGTGENYRGNVAVTVSGHTCQHWSAQTPHTHNRTPENFPCKNLDENYCRNPDGKRAPWCHTTNSQVRWEYCKIPSCDSSPVSTEQLAPTAPPELTPVVQDCYHGDGQSYRGTSSTTTTGKKCQSWSSMTPHRHQKTPENYPNAGLTMNYCRNPDADKGPWCFTTDPSVRWEYCNLKKCSGTEASVVAPPPVVLLPDVETPSEEDCMFGNGKGYRGKRATTVTGTPCQDWAAQEPHRHSIFTPETNPRAGLEKNYCRNPDGDVGGPWCYTTNPRKLYDYCDVPQCAAPSFDCGKPQVEPKKCPGRVVGGCVAHPHSWPWQVSLRTRFGMHFCGGTLISPEWVLTAAHCLEKSPRPSSYKVILGAHQEVNLEPHVQEIEVSRLFLEPTRKDIALLKLSSPAVITDKVIPACLPSPNYVVADRTECFITGWGETQGTFGAGLLKEAQLPVIENKVCNRYEFLNGRVQSTELCAGHLAGGTDSCQGDSGGPLVCFEKDKYILQGVTSWGLGCARPNKPGVYVRVSRFVTWIEGVMRNN.

Residues methionine 1–glycine 19 form the signal peptide. One can recognise a PAN domain in the interval glutamate 20–valine 98. Intrachain disulfides connect cysteine 49–cysteine 73, cysteine 53–cysteine 61, cysteine 103–cysteine 181, cysteine 124–cysteine 164, cysteine 152–cysteine 176, cysteine 185–cysteine 262, cysteine 188–cysteine 316, cysteine 206–cysteine 245, cysteine 234–cysteine 257, cysteine 275–cysteine 352, cysteine 296–cysteine 335, and cysteine 324–cysteine 347. 2 consecutive Kringle domains span residues cysteine 103 to cysteine 181 and glutamate 184 to cysteine 262. Residues lysine 126–glutamate 145 form a disordered region. Residues arginine 136, aspartate 158, and arginine 172 each coordinate L-lysine. Serine 268 is a glycosylation site (O-linked (GalNAc...) serine). The Kringle 3 domain occupies cysteine 275 to cysteine 352. N-linked (GlcNAc...) asparagine glycosylation occurs at asparagine 308. The O-linked (GalNAc...) threonine glycan is linked to threonine 365. Disulfide bonds link cysteine 377–cysteine 454, cysteine 398–cysteine 437, cysteine 426–cysteine 449, cysteine 481–cysteine 560, cysteine 502–cysteine 543, cysteine 531–cysteine 555, cysteine 567–cysteine 685, cysteine 577–cysteine 585, and cysteine 607–cysteine 623. Kringle domains are found at residues cysteine 377–cysteine 454 and cysteine 481–cysteine 560. Positions lysine 396–tyrosine 416 are disordered. The L-lysine site is built by aspartate 432 and arginine 445. Positions valine 581 to arginine 808 constitute a Peptidase S1 domain. At serine 597 the chain carries Phosphoserine. Catalysis depends on charge relay system residues histidine 622 and aspartate 665. Serine 688 carries the phosphoserine modification. Disulfide bonds link cysteine 699–cysteine 766, cysteine 729–cysteine 745, and cysteine 756–cysteine 784. Residue serine 760 is the Charge relay system of the active site.

The protein belongs to the peptidase S1 family. Plasminogen subfamily. In terms of assembly, interacts (both mature PLG and the angiostatin peptide) with CSPG4 and AMOT. Interacts (via the Kringle domains) with HRG; the interaction tethers PLG to the cell surface and enhances its activation. Interacts (via Kringle 4 domain) with ADA; the interaction stimulates PLG activation when in complex with DPP4. Angiostatin: Interacts with ATP5F1A; the interaction inhibits most of the angiogenic effects of angiostatin. Interacts (plasmin) with iripin-8, a serine protease inhibitor from Ixodes ricinus saliva. Interacts (plasmin) with iripin-1, a serine protease inhibitor from Ixodes ricinus saliva. Interacts (plasmin) with Kazal-type trypsin inhibitor, a serine protease inhibitor from Aedes aegypti. (Microbial infection) Interacts with C.albicans GPD2; the interaction is direct and provides active plasmin on the surface of fungal cells. As to quaternary structure, (Microbial infection) Interacts with Staphylococcus aureus protein FnbB; this interaction provides active plasmin on the surface of bacterial cells. In terms of assembly, (Microbial infection) Interacts with P.falciparum (strain NF54) enolase ENO (via DKSLVK motif); the interaction occurs at the ookinete cell surface and is required for ookinete invasion of the mosquito midgut. (Microbial infection) Interacts with B.burgdorferi OspC. Post-translationally, N-linked glycan contains N-acetyllactosamine and sialic acid. O-linked glycans consist of Gal-GalNAc disaccharide modified with up to 2 sialic acid residues (microheterogeneity). In terms of processing, in the presence of the inhibitor, the activation involves only cleavage after Arg-580, yielding two chains held together by two disulfide bonds. In the absence of the inhibitor, the activation involves additionally the removal of the activation peptide. (Microbial infection) The Y.pestis Pla protein cleaves between Arg-580 and Val-581, generating plasmin which facilitates bacterial migration and infection. In terms of tissue distribution, present in plasma and many other extracellular fluids. It is synthesized in the liver.

Its subcellular location is the secreted. It carries out the reaction Preferential cleavage: Lys-|-Xaa &gt; Arg-|-Xaa, higher selectivity than trypsin. Converts fibrin into soluble products.. With respect to regulation, converted into plasmin by plasminogen activators, both plasminogen and its activator being bound to fibrin. Activated with catalytic amounts of streptokinase. Plasmin activity inhibited by SERPINE2. Plasmin dissolves the fibrin of blood clots and acts as a proteolytic factor in a variety of other processes including embryonic development, tissue remodeling, tumor invasion, and inflammation. In ovulation, weakens the walls of the Graafian follicle. It activates the urokinase-type plasminogen activator, collagenases and several complement zymogens, such as C1, C4 and C5. Cleavage of fibronectin and laminin leads to cell detachment and apoptosis. Also cleaves fibrin, thrombospondin and von Willebrand factor. Its role in tissue remodeling and tumor invasion may be modulated by CSPG4. Binds to cells. Its function is as follows. Angiostatin is an angiogenesis inhibitor that blocks neovascularization and growth of experimental primary and metastatic tumors in vivo. Functionally, (Microbial infection) ENO/enoloase from parasite P.falciparum (strain NF54) interacts with PLG present in the mosquito blood meal to promote the invasion of the mosquito midgut by the parasite ookinete. The catalytic active form, plasmin, is essential for the invasion of the mosquito midgut. In terms of biological role, (Microbial infection) Binds to OspC on the surface of B.burgdorferi cells, possibly conferring an extracellular protease activity on the bacteria that allows it to traverse host tissue. (Microbial infection) Interacts with dengue virus type 2 particles. Enhances dengue virus type 2 infection in Aedes aegypti mosquito midgut by increasing midgut internalization, resulting in higher infection rates and viral dissemination in mosquitoes. This Homo sapiens (Human) protein is Plasminogen (PLG).